We begin with the raw amino-acid sequence, 419 residues long: MKFTELTVTEFDNFVQNPSLESHYFQVKENIVTRENDGFEVVLLGIKDDNNKVIAASLFSKIPTMGSYVYYSNRGPVMDFSDLGLVDYYLKELDKYLQQHQCLYVKLDPYWLYHLYDKDIVPFEGREKNDALVNLFKSHGYEHHGFTTEYDTSSQVRWMGVLNLEGKTPETLKKTFDSQRKRNINKAINYGVKVRFLERDEFNLFLDLYRETEERAGFVSKTDDYFYNFIDTYGDKVLVPLAYIDLDEYVLKLQQELNDKENRRDQMMAKENKSDKQMKKIAELDKQIDHDQHELLNASELSKTDGSILNLASGVYFANAYEVNYFSGGSSEKYNQFMGPYMMHWFMINYCFDNGYDRYNFYGLSGDFTENSEDYGVYRFKRGFNVQIEELIGDFYKPIHKVKYWLFTTLDKLRKKLKK.

This sequence belongs to the FemABX family. Homodimer. Interacts with FemA.

It is found in the cytoplasm. The catalysed reaction is MurNAc-L-Ala-D-isoglutaminyl-L-Lys-(N(6)-tri-Gly)-D-Ala-D-Ala-diphospho-di-trans,octa-cis-undecaprenyl-GlcNAc + 2 glycyl-tRNA(Gly) = MurNAc-L-Ala-D-isoglutaminyl-L-Lys-(N(6)-penta-Gly)-D-Ala-D-Ala-diphospho-di-trans,octa-cis-undecaprenyl-GlcNAc + 2 tRNA(Gly) + 2 H(+). In terms of biological role, catalyzes the formation of the pentaglycine interpeptide bridge, which is characteristic of the S.aureus peptidoglycan. Adds glycines 4 and 5 of the pentaglycine bridge, using glycyl-tRNA(Gly) as donor. This is Aminoacyltransferase FemB (femB) from Staphylococcus aureus (strain bovine RF122 / ET3-1).